A 289-amino-acid chain; its full sequence is UPF0276 protein BPP1075 (289 aa).

It belongs to the UPF0276 family.

The sequence is that of UPF0276 protein BPP1075 from Bordetella parapertussis (strain 12822 / ATCC BAA-587 / NCTC 13253).